Consider the following 205-residue polypeptide: Ribonuclease HII (205 aa).

The RNase H type-2 domain occupies 1-205 (MLVCGVDEAG…RPARLIEAGG (205 aa)). A divalent metal cation-binding residues include D7, E8, and D105.

This sequence belongs to the RNase HII family. Mn(2+) is required as a cofactor. Mg(2+) serves as cofactor.

Its subcellular location is the cytoplasm. It carries out the reaction Endonucleolytic cleavage to 5'-phosphomonoester.. Endonuclease that specifically degrades the RNA of RNA-DNA hybrids. This is Ribonuclease HII from Cenarchaeum symbiosum (strain A).